The following is a 42-amino-acid chain: Potassium channel toxin gamma-KTx 1.8 (42 aa).

Disulfide bonds link cysteine 5–cysteine 23, cysteine 11–cysteine 34, cysteine 20–cysteine 39, and cysteine 24–cysteine 41.

Belongs to the ergtoxin family. Gamma-KTx 1 subfamily. In terms of tissue distribution, expressed by the venom gland.

It is found in the secreted. Functionally, blocks in a reversible manner human and rat Kv11.1/KCNH2/ERG1 potassium channels. Also completely and irreversibly blocks rat Kv11.2/KCNH6/ERG2 and human Kv11.3/KCNH7/ERG3 channels. Also weakly inhibits Kir2.1/KCNJ2 and Kv1.2/KCNA2 potassium channels. The sequence is that of Potassium channel toxin gamma-KTx 1.8 from Centruroides elegans (Bark scorpion).